Here is a 1014-residue protein sequence, read N- to C-terminus: SUMO-specific isopeptidase USPL1 (1014 aa).

2 disordered regions span residues 137 to 158 (TFTDQQSAPAETISLDKTEEQP) and 275 to 318 (EEKP…VSDE). A compositionally biased stretch (basic and acidic residues) spans 275 to 289 (EEKPVSLVHTEDQHL). The region spanning 355–636 (LFWKNEENMC…EFHILFWETD (282 aa)) is the USP domain. The Nucleophile role is filled by Cys-364. Positions 364–631 (CWLDAMLVML…PFPSSEFHIL (268 aa)) are SUMO-binding. The Proton acceptor role is filled by His-592. Disordered regions lie at residues 794-823 (HPSFQSTPIRPPPPLPPAPKPKPSLQYDKH) and 844-867 (NSQPKQISLPGGLNPSVKKTAGQE). The segment covering 802–815 (IRPPPPLPPAPKPK) has biased composition (pro residues).

Belongs to the peptidase C19 family.

It is found in the nucleus. The protein resides in the cajal body. SUMO-specific isopeptidase involved in protein desumoylation. Specifically binds SUMO proteins with a higher affinity for sumo2 and sumo3 which it cleaves more efficiently. Also able to process full-length SUMO proteins to their mature forms. Plays a key role in RNA polymerase-II-mediated snRNA transcription in the Cajal bodies. Is a component of complexes that can bind to U snRNA genes. This is SUMO-specific isopeptidase USPL1 (uspl1) from Danio rerio (Zebrafish).